Reading from the N-terminus, the 283-residue chain is Nucleoid occlusion protein (283 aa).

A disordered region spans residues 1-26 (MKQPFSRLFGFGDKQDQEMETGKQEE). Positions 13-26 (DKQDQEMETGKQEE) are enriched in basic and acidic residues. Residues 143 to 162 (ESLAQRLGKGQSTIANKLRL) constitute a DNA-binding region (H-T-H motif).

This sequence belongs to the ParB family.

It is found in the cytoplasm. The protein resides in the nucleoid. Functionally, effects nucleoid occlusion by binding relatively nonspecifically to DNA and preventing the assembly of the division machinery in the vicinity of the nucleoid, especially under conditions that disturb the cell cycle. It helps to coordinate cell division and chromosome segregation by preventing the formation of the Z ring through the nucleoid, which would cause chromosome breakage. The chain is Nucleoid occlusion protein from Halalkalibacterium halodurans (strain ATCC BAA-125 / DSM 18197 / FERM 7344 / JCM 9153 / C-125) (Bacillus halodurans).